A 297-amino-acid polypeptide reads, in one-letter code: Tyrosine recombinase XerD (297 aa).

In terms of domain architecture, Core-binding (CB) spans 2-86; the sequence is KKLDPIIEQF…CLRKFFRFLC (85 aa). A Tyr recombinase domain is found at 107-291; sequence QLPKSLSEEQ…AKTRLKSIHK (185 aa). Catalysis depends on residues Arg-147, Lys-171, His-243, Arg-246, and His-269. The O-(3'-phospho-DNA)-tyrosine intermediate role is filled by Tyr-278.

Belongs to the 'phage' integrase family. XerD subfamily. As to quaternary structure, forms a cyclic heterotetrameric complex composed of two molecules of XerC and two molecules of XerD.

It is found in the cytoplasm. Site-specific tyrosine recombinase, which acts by catalyzing the cutting and rejoining of the recombining DNA molecules. The XerC-XerD complex is essential to convert dimers of the bacterial chromosome into monomers to permit their segregation at cell division. It also contributes to the segregational stability of plasmids. The chain is Tyrosine recombinase XerD from Haemophilus ducreyi (strain 35000HP / ATCC 700724).